The following is a 230-amino-acid chain: uncharacterized protein (230 aa).

The helical transmembrane segment at 17 to 37 threads the bilayer; that stretch reads AGALSLGIGFFALASALWFLI. N-linked (GlcNAc...) asparagine glycosylation is present at Asn-126.

It is found in the membrane. This is an uncharacterized protein from Mus musculus (Mouse).